Here is a 378-residue protein sequence, read N- to C-terminus: MDLAGLLKSQFLCHLVFCYVFIASGLIINTIQLFTLLLWPINKQLFRKINCRLSYCISSQLVMLLEWWSGTECTIFTDPRAYLKYGKENAIVVLNHKFEIDFLCGWSLSERFGLLGGSKVLAKKELAYVPIIGWMWYFTEMVFCSRKWEQDRKTVATSLQHLRDYPEKYFFLIHCEGTRFTEKKHEISMQVARAKGLPRLKHHLLPRTKGFAITVRSLRNVVSAVYDCTLNFRNNENPTLLGVLNGKKYHADLYVRRIPLEDIPEDDDECSAWLHKLYQEKDAFQEEYYRTGTFPETPMVPPRRPWTLVNWLFWASLVLYPFFQFLVSMIRSGSSLTLASFILVFFVASVGVRWMIGVTEIDKGSAYGNSGSKQKLND.

The helical transmembrane segment at 11–31 (FLCHLVFCYVFIASGLIINTI) threads the bilayer. Positions 96–101 (HKFEID) match the HXXXXD motif motif. 3 helical membrane passes run 125 to 145 (ELAYVPIIGWMWYFTEMVFCS), 307 to 327 (TLVNWLFWASLVLYPFFQFLV), and 338 to 358 (LASFILVFFVASVGVRWMIGV).

Belongs to the 1-acyl-sn-glycerol-3-phosphate acyltransferase family.

The protein localises to the endoplasmic reticulum membrane. The catalysed reaction is a 1-acyl-sn-glycero-3-phosphate + an acyl-CoA = a 1,2-diacyl-sn-glycero-3-phosphate + CoA. It carries out the reaction (4Z,7Z,10Z,13Z,16Z,19Z)-docosahexaenoyl-CoA + 1-hexadecanoyl-sn-glycero-3-phosphate = 1-hexadecanoyl-2-(4Z,7Z,10Z,13Z,16Z,19Z-docosahexaenoyl)-sn-glycero-3-phosphate + CoA. The enzyme catalyses 1-octadecanoyl-sn-glycero-3-phosphate + (9Z,12Z)-octadecadienoyl-CoA = 1-octadecanoyl-2-(9Z,12Z-octadecadienoyl)-sn-glycero-3-phosphate + CoA. It catalyses the reaction 1-octadecanoyl-sn-glycero-3-phosphate + (4Z,7Z,10Z,13Z,16Z,19Z)-docosahexaenoyl-CoA = 1-octadecanoyl-2-(4Z,7Z,10Z,13Z,16Z,19Z-docosahexaenoyl)-sn-glycero-3-phosphate + CoA. The catalysed reaction is (4Z,7Z,10Z,13Z,16Z,19Z)-docosahexaenoyl-CoA + 1-(9Z-octadecenoyl)-sn-glycero-3-phosphate = 1-(9Z-octadecenoyl)-2-(4Z,7Z,10Z,13Z,16Z,19Z-docosahexaenoyl)-sn-glycero-3-phosphate + CoA. Its pathway is phospholipid metabolism; CDP-diacylglycerol biosynthesis; CDP-diacylglycerol from sn-glycerol 3-phosphate: step 2/3. Converts 1-acyl-sn-glycerol-3-phosphate (lysophosphatidic acid or LPA) into 1,2-diacyl-sn-glycerol-3-phosphate (phosphatidic acid or PA) by incorporating an acyl moiety at the sn-2 position of the glycerol backbone. Exhibits high acyl-CoA specificity for polyunsaturated fatty acyl-CoA, especially docosahexaenoyl-CoA (22:6-CoA, DHA-CoA). This Pongo abelii (Sumatran orangutan) protein is 1-acyl-sn-glycerol-3-phosphate acyltransferase delta (AGPAT4).